A 273-amino-acid chain; its full sequence is MSPKRDGLGTGDGLHSQVLQEQVSTGDNLHECDSQGPSKHTLVREGKTYKCKECGSVFNKNSLLVRHQQIHTGVKPYECQECGKAFPEKVDFVRHVRIHTGEKPCKCVECGKVFNRRSHLLCHHQIHTGEKPYECSECGRTFSYHSVFIQHRMTHTGEKLFGCKECGKSFYYNSSLTRHMKIHTREKPYKCSECGKTFTYHSVFFRHSMTHTAGKPYECKECGKGFYYSYSLTRHTRSHTGEKPYECLEHRKAFGYHSAFAQQSKIHSGGKNL.

7 consecutive C2H2-type zinc fingers follow at residues 49-71, 77-99, 103-127, 133-155, 161-183, 189-211, and 217-239; these read YKCK…QQIH, YECQ…VRIH, KPCK…HQIH, YECS…RMTH, FGCK…MKIH, YKCS…SMTH, and YECK…TRSH.

This sequence belongs to the krueppel C2H2-type zinc-finger protein family.

It is found in the nucleus. May be involved in transcriptional regulation. The sequence is that of Zinc finger protein 80 (ZNF80) from Pongo pygmaeus (Bornean orangutan).